The primary structure comprises 440 residues: Protein CANDIDATE G-PROTEIN COUPLED RECEPTOR 7 (440 aa).

A signal peptide spans 1–24 (MAKMPLSVVVFLLFSAAFLAVSMA). Asn-124 and Asn-162 each carry an N-linked (GlcNAc...) asparagine glycan. The next 5 helical transmembrane spans lie at 175–195 (LPTL…FWSY), 207–227 (IHLL…CAAE), 243–263 (ILFY…IILI), 281–301 (VLII…VIGE), and 315–335 (VFLL…VWSI). Asn-351 is a glycosylation site (N-linked (GlcNAc...) asparagine). 2 consecutive transmembrane segments (helical) span residues 363 to 383 (IVVI…KTIA) and 390 to 410 (VSFA…FHMF).

This sequence belongs to the LU7TM family.

It localises to the membrane. Plays a role in plants and microbes interactions. G-protein coupled receptor involved in root growth mediated by the bacterial quorum-sensing signals N-acyl-homoserine lactones (AHLs). The sequence is that of Protein CANDIDATE G-PROTEIN COUPLED RECEPTOR 7 from Arabidopsis thaliana (Mouse-ear cress).